The chain runs to 401 residues: Acetate kinase (401 aa).

Residue Asn-7 participates in Mg(2+) binding. Lys-14 serves as a coordination point for ATP. Arg-91 contacts substrate. Catalysis depends on Asp-148, which acts as the Proton donor/acceptor. Residues 208–212, 283–285, and 331–335 contribute to the ATP site; these read HLGNG, DFR, and GVGEN. Glu-384 contributes to the Mg(2+) binding site.

The protein belongs to the acetokinase family. In terms of assembly, homodimer. Requires Mg(2+) as cofactor. It depends on Mn(2+) as a cofactor.

It localises to the cytoplasm. The catalysed reaction is acetate + ATP = acetyl phosphate + ADP. It functions in the pathway metabolic intermediate biosynthesis; acetyl-CoA biosynthesis; acetyl-CoA from acetate: step 1/2. Catalyzes the formation of acetyl phosphate from acetate and ATP. Can also catalyze the reverse reaction. In Helicobacter hepaticus (strain ATCC 51449 / 3B1), this protein is Acetate kinase.